The primary structure comprises 122 residues: Small ribosomal subunit protein uS13 (122 aa).

The segment at 99–122 is disordered; sequence RGQRTHTNARTRKGPAKAIAGKKK.

This sequence belongs to the universal ribosomal protein uS13 family. Part of the 30S ribosomal subunit. Forms a loose heterodimer with protein S19. Forms two bridges to the 50S subunit in the 70S ribosome.

Located at the top of the head of the 30S subunit, it contacts several helices of the 16S rRNA. In the 70S ribosome it contacts the 23S rRNA (bridge B1a) and protein L5 of the 50S subunit (bridge B1b), connecting the 2 subunits; these bridges are implicated in subunit movement. Contacts the tRNAs in the A and P-sites. The sequence is that of Small ribosomal subunit protein uS13 from Sinorhizobium medicae (strain WSM419) (Ensifer medicae).